A 44-amino-acid chain; its full sequence is Conotoxin Sr5.5 (44 aa).

Positions 1–19 (MRCLPVFVILLLLIASAPS) are cleaved as a signal peptide. A propeptide spanning residues 20-29 (VDDNAKGTQH) is cleaved from the precursor.

It belongs to the conotoxin T superfamily. In terms of processing, contains 2 disulfide bonds that can be either 'C1-C3, C2-C4' or 'C1-C4, C2-C3', since these disulfide connectivities have been observed for conotoxins with cysteine framework V (for examples, see AC P0DQQ7 and AC P81755). Expressed by the venom duct.

It is found in the secreted. In Conus spurius (Alphabet cone), this protein is Conotoxin Sr5.5.